Here is a 614-residue protein sequence, read N- to C-terminus: MGIIHSLSPDLINQIAAGEVIESTHSILKELIENSIDAGASKIEIATESAGLGRILVSDDGHGITKEDLPLAIKRYATSKIQTFHDLEHLFTFGFRGEALASIASVSRLVIESGTEGNRMAQRVVVEEGKVVSEEEIPFFQGTKIEIKDLFYNTPVRRKFLKTESGEEKKNRTRVQTMALGEPSIGFRYVQNGKEVFHVQKEEPLERVLSIYGENLRDHLLPVHSSRNGMTLRGFISHPDFYKSSRMGQFFFVNNRSVELKFSAQILKRCYGELLPSGAFPYAFLFFDLPREFVDVNVHPQKKEVRFLSEETITGILFQGITEVLRTSTPVEFLEMRRRLSMPIPYHSSADKSQFGGEGMSMGGPGFGFGMAGRGQAVWGSQNEEGNPLLGPSSIEGRAGFSLDGIGAGTNLHLLGDNLTKHNLFVPKKHYGVIFETFILAEAEDGLYIIDQHTAHERIRYEEVLRDLKSKAYKSQSLLTPIRLELTKEEAEEMIAEKHRFSELGITLEPFSGGTILIREVPSYIDPGKETETILDLWERFKSKDPEEKELYDEMAKCVACRSAIKKGDQVSDPIIGELLQRLSYCENPSLCPHGRPTLIKLTRKDLETMFHRI.

The protein belongs to the DNA mismatch repair MutL/HexB family.

Functionally, this protein is involved in the repair of mismatches in DNA. It is required for dam-dependent methyl-directed DNA mismatch repair. May act as a 'molecular matchmaker', a protein that promotes the formation of a stable complex between two or more DNA-binding proteins in an ATP-dependent manner without itself being part of a final effector complex. This chain is DNA mismatch repair protein MutL, found in Leptospira biflexa serovar Patoc (strain Patoc 1 / ATCC 23582 / Paris).